The sequence spans 591 residues: L-fucose isomerase (591 aa).

Residues Glu337 and Asp361 each act as proton acceptor in the active site. Mn(2+) is bound by residues Glu337, Asp361, and His528.

The protein belongs to the L-fucose isomerase family. In terms of assembly, homohexamer. It depends on Mn(2+) as a cofactor.

The protein resides in the cytoplasm. It catalyses the reaction L-fucose = L-fuculose. The protein operates within carbohydrate degradation; L-fucose degradation; L-lactaldehyde and glycerone phosphate from L-fucose: step 1/3. In terms of biological role, converts the aldose L-fucose into the corresponding ketose L-fuculose. In Escherichia coli (strain UTI89 / UPEC), this protein is L-fucose isomerase.